Consider the following 160-residue polypeptide: 2-C-methyl-D-erythritol 2,4-cyclodiphosphate synthase (160 aa).

Positions 8 and 10 each coordinate a divalent metal cation. 4-CDP-2-C-methyl-D-erythritol 2-phosphate-binding positions include 8-10 (DVH) and 34-35 (HS). Residue H42 participates in a divalent metal cation binding. Residues 56-58 (DIG), 61-65 (FPDTD), 100-106 (AQAPKML), 132-135 (TTTE), F139, and R142 contribute to the 4-CDP-2-C-methyl-D-erythritol 2-phosphate site.

It belongs to the IspF family. In terms of assembly, homotrimer. Requires a divalent metal cation as cofactor.

It carries out the reaction 4-CDP-2-C-methyl-D-erythritol 2-phosphate = 2-C-methyl-D-erythritol 2,4-cyclic diphosphate + CMP. Its pathway is isoprenoid biosynthesis; isopentenyl diphosphate biosynthesis via DXP pathway; isopentenyl diphosphate from 1-deoxy-D-xylulose 5-phosphate: step 4/6. Its function is as follows. Involved in the biosynthesis of isopentenyl diphosphate (IPP) and dimethylallyl diphosphate (DMAPP), two major building blocks of isoprenoid compounds. Catalyzes the conversion of 4-diphosphocytidyl-2-C-methyl-D-erythritol 2-phosphate (CDP-ME2P) to 2-C-methyl-D-erythritol 2,4-cyclodiphosphate (ME-CPP) with a corresponding release of cytidine 5-monophosphate (CMP). In Proteus mirabilis (strain HI4320), this protein is 2-C-methyl-D-erythritol 2,4-cyclodiphosphate synthase.